A 531-amino-acid chain; its full sequence is Cytochrome P450 monooxygenase acuC (531 aa).

Residues 3-23 (PIVWLLGGAIALLVVVIRAAW) form a helical membrane-spanning segment. C447 lines the heme pocket.

This sequence belongs to the cytochrome P450 family. Heme is required as a cofactor.

It localises to the endoplasmic reticulum membrane. The catalysed reaction is 3-methylphenol + reduced [NADPH--hemoprotein reductase] + O2 = 3-hydroxybenzyl alcohol + oxidized [NADPH--hemoprotein reductase] + H2O + H(+). It participates in secondary metabolite biosynthesis. Cytochrome P450 monooxygenase; part of the gene cluster that mediates the biosynthesis of aculins. The pathway begins with the synthesis of 6-methylsalicylic acid by the polyketide synthase (PKS) acuA via condensation of acetate and malonate units. The 6-methylsalicylic acid decarboxylase acuB then catalyzes the decarboxylation of 6-methylsalicylic acid to yield m-cresol (also known as 3-methylphenol). These first reactions occur in the cytosol. The intermediate m-cresol is then transported into the endoplasmic reticulum where the cytochrome P450 monooxygenase acuC converts it to m-hydroxybenzyl alcohol, which is further converted to gentisyl alcohol by the cytochrome P450 monooxygenase acuD. Gentisyl alcohol is further oxidized by the oxidoreductase acuE that probably catalyzes hydroxylation of the aromatic ring. The aromatic system might then be opened by oxidation through a Baeyer-Villiger type of oxidation, which could be catalyzed by acuF, with the carboxylic acid at C-1 subsequently reduced to an aldehyde by acuG. Subsequently, a hemiacetal is formed, before the dehydrogenase acuH would reduce the double bond between C-4 and C-6. Finally, keto-enol tautomerism results in formation of aculinic acid, which exists as two diastereomers (both R/S configurations at C-1) by non-enzymatic hemiacetal formation. The carboxypeptidase acuI could be involved in the linking of aculinic acid to an aculene A moiety produced by the aculene biosynthesis cluster and which leads to the production of aculin A. AcuI may also be involved in the attachment of proline to aculinic acid to form epi-aculins A and B. This chain is Cytochrome P450 monooxygenase acuC, found in Aspergillus aculeatus (strain ATCC 16872 / CBS 172.66 / WB 5094).